Reading from the N-terminus, the 247-residue chain is MDTRKNLKELIKSSSNIVFFGGAGVSTESNIPDFRSEEGLYKTKSNFSYSPEVMLSHSFFKEHTEDFFDFYKEKMIYKYAKPNLAHHALAKLEKVGKLKAIITQNIDGLHQLAGSKNVIELHGGVGRNYCMDCNKFFDLNYILNNKEVVPKCDVCGGIVKPDVVLYEEPLNMDNINNAVRYVENSDVLIVGGTSLVVYPAANLIHYYKGNKLVLINKSSTPYDRKAQIVINDSIGSILGGIVEELGY.

One can recognise a Deacetylase sirtuin-type domain in the interval 1–247; that stretch reads MDTRKNLKEL…LGGIVEELGY (247 aa). Residues A23, T27, F34, R35, Q104, I106, D107, and H122 each coordinate NAD(+). Nicotinamide is bound at residue F34. I106 and D107 together coordinate nicotinamide. The active-site Proton acceptor is the H122. 4 residues coordinate Zn(2+): C130, C133, C152, and C155. 4 residues coordinate NAD(+): T193, S194, N216, and I234.

This sequence belongs to the sirtuin family. Class U subfamily. Zn(2+) is required as a cofactor.

The protein resides in the cytoplasm. It carries out the reaction N(6)-acetyl-L-lysyl-[protein] + NAD(+) + H2O = 2''-O-acetyl-ADP-D-ribose + nicotinamide + L-lysyl-[protein]. In terms of biological role, NAD-dependent protein deacetylase which modulates the activities of several enzymes which are inactive in their acetylated form. The sequence is that of NAD-dependent protein deacetylase from Clostridium tetani (strain Massachusetts / E88).